The sequence spans 401 residues: S-adenosylmethionine synthase (401 aa).

His16 is an ATP binding site. Asp18 provides a ligand contact to Mg(2+). A K(+)-binding site is contributed by Glu44. L-methionine contacts are provided by Glu57 and Gln100. The tract at residues 100-110 (QSPDIAQGVNE) is flexible loop. ATP contacts are provided by residues 174-176 (DAK), 241-242 (RF), Asp250, 256-257 (RK), Ala273, and Lys277. Position 250 (Asp250) interacts with L-methionine. Residue Lys281 participates in L-methionine binding.

The protein belongs to the AdoMet synthase family. As to quaternary structure, homotetramer; dimer of dimers. It depends on Mg(2+) as a cofactor. Requires K(+) as cofactor.

Its subcellular location is the cytoplasm. The catalysed reaction is L-methionine + ATP + H2O = S-adenosyl-L-methionine + phosphate + diphosphate. It functions in the pathway amino-acid biosynthesis; S-adenosyl-L-methionine biosynthesis; S-adenosyl-L-methionine from L-methionine: step 1/1. In terms of biological role, catalyzes the formation of S-adenosylmethionine (AdoMet) from methionine and ATP. The overall synthetic reaction is composed of two sequential steps, AdoMet formation and the subsequent tripolyphosphate hydrolysis which occurs prior to release of AdoMet from the enzyme. The protein is S-adenosylmethionine synthase of Streptococcus equi subsp. zooepidemicus (strain H70).